Reading from the N-terminus, the 61-residue chain is Large ribosomal subunit protein bL28 (61 aa).

The protein belongs to the bacterial ribosomal protein bL28 family.

This Lactobacillus gasseri (strain ATCC 33323 / DSM 20243 / BCRC 14619 / CIP 102991 / JCM 1131 / KCTC 3163 / NCIMB 11718 / NCTC 13722 / AM63) protein is Large ribosomal subunit protein bL28.